An 816-amino-acid polypeptide reads, in one-letter code: H(+)/Cl(-) exchange transporter 5 (816 aa).

Topologically, residues 1 to 124 (MAMWQGAMDN…WALIHSVSDA (124 aa)) are cytoplasmic. 2 consecutive transmembrane segments (helical) span residues 125–162 (FSGW…ICTG) and 208–231 (VNYF…VKVF). Positions 237–241 (GSGIP) match the Selectivity filter part_1 motif. Residue Ser-238 coordinates chloride. The segment at residues 240-247 (IPEIKTIL) is an intramembrane region (helical). A run of 2 helical transmembrane segments spans residues 256–275 (LGKW…VSSG) and 281–300 (EGPL…HCFN). Residues 279–283 (GKEGP) carry the Selectivity filter part_2 motif. 2 intramembrane regions (helical) span residues 312–324 (VLSA…VSVA) and 328–336 (PIGGVLFSL). 5 helical membrane-spanning segments follow: residues 348–366 (LWRS…RSIN), 389–414 (LVPF…IAWC), 422–442 (LGKY…ILAF), 498–518 (MWQL…TFGM), and 523–542 (GLFI…LGVG). A Selectivity filter part_3 motif is present at residues 523–527 (GLFIP). Phe-525 contributes to the chloride binding site. An intramembrane region (helical) is located at residues 570-584 (GLYAMVGAAACLGGV). Residues 585–587 (TRM) constitute an intramembrane region (note=Loop between two helices). Residues 588–599 (TVSLVVIMFELT) constitute an intramembrane region (helical). Positions 600–604 (GGLEY) form an intramembrane region, note=Loop between two helices. A helical membrane pass occupies residues 605–622 (IVPLMAAAMTSKWVADAL). At 623–816 (GREGIYDAHI…NQDPDSILFN (194 aa)) the chain is on the cytoplasmic side. Tyr-628 provides a ligand contact to chloride. CBS domains follow at residues 656-720 (MKPR…ARKK) and 752-812 (ILDL…DPDS). Residues Thr-666, 687-689 (YSG), and 794-797 (TKKD) each bind ATP.

This sequence belongs to the chloride channel (TC 2.A.49) family. ClC-5/CLCN5 subfamily. Interacts with NEDD4 and NEDD4L. In terms of processing, ubiquitinated by NEDD4L in the presence of albumin; which promotes endocytosis and proteasomal degradation.

The protein resides in the golgi apparatus membrane. It localises to the endosome membrane. It is found in the cell membrane. The enzyme catalyses 2 chloride(in) + H(+)(out) = 2 chloride(out) + H(+)(in). Functionally, proton-coupled chloride transporter. Functions as antiport system and exchanges chloride ions against protons. Important for normal acidification of the endosome lumen. May play an important role in renal tubular function. The CLC channel family contains both chloride channels and proton-coupled anion transporters that exchange chloride or another anion for protons. The absence of conserved gating glutamate residues is typical for family members that function as channels. The polypeptide is H(+)/Cl(-) exchange transporter 5 (CLCN5) (Pongo abelii (Sumatran orangutan)).